The primary structure comprises 429 residues: UDP-N-acetylglucosamine 1-carboxyvinyltransferase (429 aa).

22-23 contributes to the phosphoenolpyruvate binding site; it reads KN. Arg102 is a UDP-N-acetyl-alpha-D-glucosamine binding site. Residue Cys126 is the Proton donor of the active site. Position 126 is a 2-(S-cysteinyl)pyruvic acid O-phosphothioketal (Cys126). Residues 131-135, Asp316, and Ile338 each bind UDP-N-acetyl-alpha-D-glucosamine; that span reads RPVDL.

This sequence belongs to the EPSP synthase family. MurA subfamily.

It is found in the cytoplasm. The catalysed reaction is phosphoenolpyruvate + UDP-N-acetyl-alpha-D-glucosamine = UDP-N-acetyl-3-O-(1-carboxyvinyl)-alpha-D-glucosamine + phosphate. It functions in the pathway cell wall biogenesis; peptidoglycan biosynthesis. Its function is as follows. Cell wall formation. Adds enolpyruvyl to UDP-N-acetylglucosamine. This Rhodopseudomonas palustris (strain BisB5) protein is UDP-N-acetylglucosamine 1-carboxyvinyltransferase.